The following is a 162-amino-acid chain: uncharacterized protein (162 aa).

In terms of domain architecture, HTH asnC-type spans 6–99 (LDDLDRAILK…YVTKTLSGFP (94 aa)). Residues 25-44 (IAEISNQLKKPESTVHFRIK) constitute a DNA-binding region (H-T-H motif).

This is an uncharacterized protein from Pyrococcus horikoshii (strain ATCC 700860 / DSM 12428 / JCM 9974 / NBRC 100139 / OT-3).